A 503-amino-acid polypeptide reads, in one-letter code: Probable cytosol aminopeptidase (503 aa).

Residues K270 and D275 each coordinate Mn(2+). K282 is a catalytic residue. Residues D293, D352, and E354 each coordinate Mn(2+). The active site involves R356.

Belongs to the peptidase M17 family. The cofactor is Mn(2+).

It localises to the cytoplasm. It carries out the reaction Release of an N-terminal amino acid, Xaa-|-Yaa-, in which Xaa is preferably Leu, but may be other amino acids including Pro although not Arg or Lys, and Yaa may be Pro. Amino acid amides and methyl esters are also readily hydrolyzed, but rates on arylamides are exceedingly low.. The catalysed reaction is Release of an N-terminal amino acid, preferentially leucine, but not glutamic or aspartic acids.. Functionally, presumably involved in the processing and regular turnover of intracellular proteins. Catalyzes the removal of unsubstituted N-terminal amino acids from various peptides. The sequence is that of Probable cytosol aminopeptidase from Edwardsiella ictaluri (strain 93-146).